A 377-amino-acid polypeptide reads, in one-letter code: Dihydroorotase, mitochondrial (377 aa).

Positions 44, 46, 130, 168, and 206 each coordinate Zn(2+). Position 130 is an N6-carboxylysine (lysine 130). Serine 223 is subject to Phosphoserine. Position 280 (aspartate 280) interacts with Zn(2+).

This sequence belongs to the metallo-dependent hydrolases superfamily. DHOase family. Class II DHOase subfamily. The cofactor is Zn(2+).

Its subcellular location is the mitochondrion. It catalyses the reaction (S)-dihydroorotate + H2O = N-carbamoyl-L-aspartate + H(+). The protein operates within pyrimidine metabolism; UMP biosynthesis via de novo pathway; (S)-dihydroorotate from bicarbonate: step 3/3. The protein is Dihydroorotase, mitochondrial (PYR4) of Arabidopsis thaliana (Mouse-ear cress).